A 172-amino-acid chain; its full sequence is Adenine phosphoribosyltransferase (172 aa).

This sequence belongs to the purine/pyrimidine phosphoribosyltransferase family. As to quaternary structure, homodimer.

It localises to the cytoplasm. The enzyme catalyses AMP + diphosphate = 5-phospho-alpha-D-ribose 1-diphosphate + adenine. The protein operates within purine metabolism; AMP biosynthesis via salvage pathway; AMP from adenine: step 1/1. In terms of biological role, catalyzes a salvage reaction resulting in the formation of AMP, that is energically less costly than de novo synthesis. The polypeptide is Adenine phosphoribosyltransferase (Streptococcus agalactiae serotype Ia (strain ATCC 27591 / A909 / CDC SS700)).